The sequence spans 324 residues: NAD(P)H-dependent D-xylose reductase I,II (324 aa).

The active-site Proton donor is the Y54. H116 is a substrate binding site. NAD(+) is bound by residues 171–172, 220–229, and 276–286; these read SN, SSFGPQSFLE, and KSNNPERLAQN.

It belongs to the aldo/keto reductase family.

The enzyme catalyses xylitol + NAD(+) = D-xylose + NADH + H(+). It carries out the reaction xylitol + NADP(+) = D-xylose + NADPH + H(+). It functions in the pathway carbohydrate metabolism; D-xylose degradation. Its function is as follows. Reduces D-xylose into xylitol. Has a preference for NADPH, but can also utilize NADH as cosubstrate. In Candida tropicalis (Yeast), this protein is NAD(P)H-dependent D-xylose reductase I,II (xyrA).